A 480-amino-acid polypeptide reads, in one-letter code: Proline--tRNA ligase (480 aa).

It belongs to the class-II aminoacyl-tRNA synthetase family. ProS type 3 subfamily. In terms of assembly, homodimer.

It localises to the cytoplasm. It catalyses the reaction tRNA(Pro) + L-proline + ATP = L-prolyl-tRNA(Pro) + AMP + diphosphate. Catalyzes the attachment of proline to tRNA(Pro) in a two-step reaction: proline is first activated by ATP to form Pro-AMP and then transferred to the acceptor end of tRNA(Pro). This is Proline--tRNA ligase from Alkaliphilus oremlandii (strain OhILAs) (Clostridium oremlandii (strain OhILAs)).